Consider the following 253-residue polypeptide: Triosephosphate isomerase (253 aa).

Substrate is bound at residue 13 to 15 (NWK). The active-site Electrophile is His-100. The active-site Proton acceptor is the Glu-169. Substrate contacts are provided by residues Gly-175, Ser-208, and 229–230 (GG).

This sequence belongs to the triosephosphate isomerase family. Homodimer.

The protein localises to the cytoplasm. The catalysed reaction is D-glyceraldehyde 3-phosphate = dihydroxyacetone phosphate. Its pathway is carbohydrate biosynthesis; gluconeogenesis. It functions in the pathway carbohydrate degradation; glycolysis; D-glyceraldehyde 3-phosphate from glycerone phosphate: step 1/1. Its function is as follows. Involved in the gluconeogenesis. Catalyzes stereospecifically the conversion of dihydroxyacetone phosphate (DHAP) to D-glyceraldehyde-3-phosphate (G3P). This is Triosephosphate isomerase from Synechococcus sp. (strain RCC307).